The sequence spans 1207 residues: DNA-directed RNA polymerase subunit beta' (1207 aa).

The Zn(2+) site is built by cysteine 60, cysteine 62, cysteine 75, and cysteine 78. Residues aspartate 450, aspartate 452, and aspartate 454 each contribute to the Mg(2+) site. Zn(2+) contacts are provided by cysteine 818, cysteine 892, cysteine 899, and cysteine 902.

The protein belongs to the RNA polymerase beta' chain family. In terms of assembly, the RNAP catalytic core consists of 2 alpha, 1 beta, 1 beta' and 1 omega subunit. When a sigma factor is associated with the core the holoenzyme is formed, which can initiate transcription. Mg(2+) is required as a cofactor. Requires Zn(2+) as cofactor.

The enzyme catalyses RNA(n) + a ribonucleoside 5'-triphosphate = RNA(n+1) + diphosphate. Functionally, DNA-dependent RNA polymerase catalyzes the transcription of DNA into RNA using the four ribonucleoside triphosphates as substrates. This is DNA-directed RNA polymerase subunit beta' from Lactococcus lactis subsp. cremoris (strain SK11).